Reading from the N-terminus, the 457-residue chain is Nuclear hormone receptor family member nhr-20 (457 aa).

Residues 16–92 constitute a DNA-binding region (nuclear receptor); the sequence is TSKCLVCEHP…AGMRRECVQK (77 aa). 2 consecutive NR C4-type zinc fingers follow at residues 19–40 and 56–80; these read CLVCEHPDGGSAHFGSTSCLAC and CKKDKNCVIFHELRMICRACRFDKC. The disordered stretch occupies residues 125-182; sequence GDQTDDNSPLSIEKKSPPGLLPNDSPMMADFKFDPSDIPSTSGGSTQRLERSPSPKLA. Over residues 162–171 the composition is skewed to polar residues; the sequence is IPSTSGGSTQ. The 257-residue stretch at 201-457 folds into the NR LBD domain; the sequence is QLKNSMDRRR…DALSKSLLTL (257 aa).

This sequence belongs to the nuclear hormone receptor family.

The protein localises to the nucleus. Functionally, orphan nuclear receptor. The sequence is that of Nuclear hormone receptor family member nhr-20 (nhr-20) from Caenorhabditis elegans.